The primary structure comprises 28 residues: Ranatuerin-2SEb (28 aa).

Cysteine 23 and cysteine 28 are joined by a disulfide.

In terms of tissue distribution, expressed by the skin glands.

The protein localises to the secreted. Mast cell degranulating peptide. Causes histamine release from rat peritoneal mast cells in vitro. Has antibacterial activity against the Gram-negative bacterium E.coli K12 and Gram-positive bacterium M.luteus NCT C2665. This is Ranatuerin-2SEb from Lithobates sevosus (Dusky gopher frog).